The chain runs to 424 residues: Phosphomethylpyrimidine synthase 2 (424 aa).

Substrate is bound by residues Asn65, Met94, Tyr123, His162, 184-186 (SRG), 225-228 (DGLR), and Glu264. His268 provides a ligand contact to Zn(2+). Tyr291 serves as a coordination point for substrate. His332 is a Zn(2+) binding site. Positions 408, 411, and 415 each coordinate [4Fe-4S] cluster.

The protein belongs to the ThiC family. Requires [4Fe-4S] cluster as cofactor.

It catalyses the reaction 5-amino-1-(5-phospho-beta-D-ribosyl)imidazole + S-adenosyl-L-methionine = 4-amino-2-methyl-5-(phosphooxymethyl)pyrimidine + CO + 5'-deoxyadenosine + formate + L-methionine + 3 H(+). It participates in cofactor biosynthesis; thiamine diphosphate biosynthesis. Functionally, catalyzes the synthesis of the hydroxymethylpyrimidine phosphate (HMP-P) moiety of thiamine from aminoimidazole ribotide (AIR) in a radical S-adenosyl-L-methionine (SAM)-dependent reaction. The chain is Phosphomethylpyrimidine synthase 2 from Methanothermobacter thermautotrophicus (strain ATCC 29096 / DSM 1053 / JCM 10044 / NBRC 100330 / Delta H) (Methanobacterium thermoautotrophicum).